A 406-amino-acid polypeptide reads, in one-letter code: Interactor protein for cytohesin exchange factors 1 (406 aa).

The PH domain maps to 13–112; it reads HADCQGWLYK…WLNKLGFAVT (100 aa). 3 disordered regions span residues 120 to 173, 253 to 285, and 383 to 406; these read DEEC…FSSL, SLNN…EDDE, and PQDP…ENSL. The span at 123-134 shows a compositional bias: acidic residues; sequence CYSESEQEDPEV. Positions 144 to 153 are enriched in low complexity; sequence ASTTSSPVAA. Arginine 164 bears the Phosphoserine mark. Positions 272–285 are enriched in basic and acidic residues; that stretch reads MADREEIKSSEDDE. The segment covering 392–406 has biased composition (polar residues); the sequence is EVMNPTSSDCVENSL.

As to quaternary structure, interacts with guanine-nucleotide exchange factors PSCD1, PSCD2, PSCD3 and PSCD4.

The protein localises to the cytoplasm. The protein resides in the cell membrane. Its function is as follows. Enhances the promotion of guanine-nucleotide exchange by PSCD2 on ARF6 in a concentration-dependent manner. This Mus musculus (Mouse) protein is Interactor protein for cytohesin exchange factors 1 (Ipcef1).